A 61-amino-acid polypeptide reads, in one-letter code: Putative neurotoxin-A (61 aa).

The signal sequence occupies residues Met-1 to Ala-19. 3 disulfide bridges follow: Cys-31–Cys-50, Cys-36–Cys-55, and Cys-40–Cys-57.

This sequence belongs to the short scorpion toxin superfamily. As to expression, expressed by the venom gland.

The protein localises to the secreted. This chain is Putative neurotoxin-A, found in Lychas mucronatus (Chinese swimming scorpion).